A 345-amino-acid polypeptide reads, in one-letter code: Transcription factor MYB106 (345 aa).

2 HTH myb-type domains span residues 9–61 (KAGL…TNYL) and 62–116 (RPDI…KKRL). DNA-binding regions (H-T-H motif) lie at residues 37 to 61 (WRSL…TNYL) and 89 to 112 (WSAI…NTHL).

As to expression, expressed in trichomes, stems, carpels, petals and stamens.

The protein resides in the nucleus. In terms of biological role, functions as a repressor of epidermal cell outgrowth and negatively regulate trichome branch formation. Acts both as a positive and a negative regulator of cellular outgrowth. Promotes both trichome expansion and branch formation. Coordinately with WIN1/SHN1, participates in the regulation of cuticle biosynthesis and wax accumulation in reproductive organs and trichomes. Functions in cuticle nanoridge formation in petals and stamens, and in morphogenesis of petal conical cells and trichomes. May play a role in the regulation of cuticle formation in vegetative organs. In Arabidopsis thaliana (Mouse-ear cress), this protein is Transcription factor MYB106.